Reading from the N-terminus, the 331-residue chain is Meiotic recombination protein P22 (331 aa).

The segment at 132 to 187 is disordered; that stretch reads NNIQKEVHQRNSQRRSIQCTPKKRGRKPKQPAKKLQSRISTDQLGSTPSPSKLPAK. Residues 152–167 are compositionally biased toward basic residues; that stretch reads PKKRGRKPKQPAKKLQ. A compositionally biased stretch (polar residues) spans 168–181; that stretch reads SRISTDQLGSTPSP.

The protein belongs to the TOP6B-like family.

The protein resides in the chromosome. Its function is as follows. Required for formation of the mei-W68-mediated double-strand breaks (DSBs) that initiate meiotic recombination. In Drosophila melanogaster (Fruit fly), this protein is Meiotic recombination protein P22.